A 941-amino-acid chain; its full sequence is MSSAPPFAAALAWSGHLRRRLDAHPDLAAWLANACAHPVSANVLAAWQAELSGPDAPEVLPVEQCRGMLRKLRERVFLTLIVRDLGGQADLEEVVGAMTVLADIAVGTAYRSVAAELAAVHGLPREQSTGDPQEMLIVGMGKLGGRELNVSSDIDLVMLYGDEGETDGPRRISNHEFYGRLTRRMMPVLSEVDADGQVFRTDLRLRPDGDAGPLAWSLDALEHYLIGQGREWERYAWLKARLMPAQAFADSNPDAQARQLESLRVPFVYRKYFDFDALAALRALRERIRQDWQRRALARNGVDSANNIKLGDGGIREIEFIVQLSQLIRGGRMPALQRRGLLEALHAERAAGLVPEGDAQKLEAAYRFLRRTEHALQYREDEQTHLLPADPAQRAALAAALGYEPAAFERTLAEHRAFVSQTFRNAFRLAGMGEEDDSPAPARTHANGHAMRPHAGALHDIEERLAGQIQRDFPEHAEDLLRRTETLLGSHRVRSLPDSSRHRLEALLPAALTAATQTSAPMDAALRLFDLIETIAQRSAYLALLAEYPDTLARVARMVAASPWAAQYLTQHPLLLDSLIDWRTLFEPLDFAQVAHQLAADLDACRLPDGEPDIERQMNLMRDVQRQASFQLLAQDLEGELTVEKLADQLSALADLLLAETIRRVWPLVNRRPGAEPHLAVIAYGKLGGKELGYASDLDLVFLFDDDREDAAELYAKLGRRMTSWLSTMTSSGRLYEVDLRLRPDGNAGLLAVSLEAFEQYQRSHAWPWEHQALTRARYAAGDTEAGARFERIRADILVMPRDVQALRGEVLGMRDKISAGHPNRSELFDVKHDRGGMVGVEFVTQYLVLCHAATHRVLVNNLGNIALLRLAGEAGLIPAPLALAAGDAYRTLRRAQHQLRLKGVDKARVPPGQLAAERATVCELWQTVLQDGTIAQAEVK.

Residues 1 to 431 are adenylyl removase; sequence MSSAPPFAAA…TFRNAFRLAG (431 aa). The segment at 447 to 941 is adenylyl transferase; it reads NGHAMRPHAG…DGTIAQAEVK (495 aa).

It belongs to the GlnE family. Mg(2+) is required as a cofactor.

The catalysed reaction is [glutamine synthetase]-O(4)-(5'-adenylyl)-L-tyrosine + phosphate = [glutamine synthetase]-L-tyrosine + ADP. The enzyme catalyses [glutamine synthetase]-L-tyrosine + ATP = [glutamine synthetase]-O(4)-(5'-adenylyl)-L-tyrosine + diphosphate. Its function is as follows. Involved in the regulation of glutamine synthetase GlnA, a key enzyme in the process to assimilate ammonia. When cellular nitrogen levels are high, the C-terminal adenylyl transferase (AT) inactivates GlnA by covalent transfer of an adenylyl group from ATP to specific tyrosine residue of GlnA, thus reducing its activity. Conversely, when nitrogen levels are low, the N-terminal adenylyl removase (AR) activates GlnA by removing the adenylyl group by phosphorolysis, increasing its activity. The regulatory region of GlnE binds the signal transduction protein PII (GlnB) which indicates the nitrogen status of the cell. In Bordetella pertussis (strain Tohama I / ATCC BAA-589 / NCTC 13251), this protein is Bifunctional glutamine synthetase adenylyltransferase/adenylyl-removing enzyme.